We begin with the raw amino-acid sequence, 476 residues long: Doublecortin domain-containing protein 2 (476 aa).

2 consecutive Doublecortin domains span residues 17 to 100 (KSVL…LNYL) and 139 to 221 (CTIF…LPYS). Positions 234-476 (FGQKASSLPP…QQNKDYAAVA (243 aa)) are disordered. A compositionally biased stretch (polar residues) spans 261–272 (STVGSSDNSSPQ). Position 270 is a phosphoserine (Ser270). A compositionally biased stretch (basic and acidic residues) spans 279-289 (KKEDVNSEKLT). Positions 296–306 (KLKNSQETIPN) are enriched in polar residues. The span at 354-366 (EKANKDAEQKEDF) shows a compositional bias: basic and acidic residues. Residues 415–426 (ELQQVNNELQLV) show a composition bias toward low complexity. A compositionally biased stretch (basic and acidic residues) spans 446–455 (DPQRPPRPEV).

In terms of assembly, interacts with DVL1, DVL2 and DVL3. As to expression, ubiquitously expressed. In brain, highly expressed in the entorhinal cortex, inferior temporal cortex, medial temporal cortex, hypothalamus, amygdala and hippocampus. Expressed in liver by cholangiocytes, the epithelial cells of the bile ducts (at protein level).

The protein resides in the cell projection. It is found in the cilium. Its subcellular location is the cytoplasm. It localises to the cytoskeleton. The protein localises to the cilium axoneme. The protein resides in the kinocilium. Functionally, protein that plays a role in the inhibition of canonical Wnt signaling pathway. May be involved in neuronal migration during development of the cerebral neocortex. Involved in the control of ciliogenesis and ciliary length. The protein is Doublecortin domain-containing protein 2 (DCDC2) of Homo sapiens (Human).